A 319-amino-acid chain; its full sequence is Forkhead box protein B1 (319 aa).

Residues 13 to 107 (KPPYSYISLT…ENGSFLRRRK (95 aa)) constitute a DNA-binding region (fork-head). A disordered region spans residues 278–310 (LSNSSPSMSPTSPQTATSQSSPATPSDTLTNPS). Positions 279–305 (SNSSPSMSPTSPQTATSQSSPATPSDT) are enriched in low complexity.

In early gastrulae, expressed in the inner layer of the posterior dorsal ectoderm and in non-involuted mesoderm. By the mid-gastrula stage, expressed solely in the posterior ectoderm. At the end of gastrulation, expressed in ectodermal regions fated to become diencephalon, midbrain and hindbrain, and weakly expressed in regions fated to become spinal cord and tailbud. At the neurula stage, expressed in the midbrain and posterior forebrain (diencephalon) but not in the more anterior forebrain (telencephalon). Also expressed posteriorly in rhombomere 5. At tailbud stages, expression remains in the anterior brain and is also detectable along the length of the central nervous system and in the tailbud.

It is found in the nucleus. Probable transcription factor. May be involved in the early anteroposterior patterning of the neuroectoderm. This is Forkhead box protein B1 from Xenopus laevis (African clawed frog).